Here is a 128-residue protein sequence, read N- to C-terminus: Azurin (128 aa).

One can recognise a Plastocyanin-like domain in the interval 1 to 128 (AECKVTVDST…SMMKGTVTLK (128 aa)). C3 and C26 are oxidised to a cystine. The Cu cation site is built by H46, C112, H117, and M121.

The protein resides in the periplasm. Functionally, transfers electrons from cytochrome c551 to cytochrome oxidase. The chain is Azurin from Pseudomonas putida (Arthrobacter siderocapsulatus).